The chain runs to 141 residues: Hemoglobin subunit alpha (141 aa).

Residues 1-141 enclose the Globin domain; the sequence is VLSPADKTNV…VSTVLTSKYR (141 aa). A Phosphoserine modification is found at Ser3. An N6-succinyllysine modification is found at Lys7. At Thr8 the chain carries Phosphothreonine. Lys11 carries the N6-succinyllysine modification. Lys16 carries the post-translational modification N6-acetyllysine; alternate. At Lys16 the chain carries N6-succinyllysine; alternate. Tyr24 bears the Phosphotyrosine mark. Ser35 is subject to Phosphoserine. Residue Lys40 is modified to N6-succinyllysine. Position 49 is a phosphoserine (Ser49). His58 is an O2 binding site. Residue His87 participates in heme b binding. Residue Ser102 is modified to Phosphoserine. Thr108 is modified (phosphothreonine). Residue Ser124 is modified to Phosphoserine. A phosphothreonine mark is found at Thr134 and Thr137. Phosphoserine is present on Ser138.

It belongs to the globin family. In terms of assembly, heterotetramer of two alpha chains and two beta chains. Red blood cells.

Its function is as follows. Involved in oxygen transport from the lung to the various peripheral tissues. Hemopressin acts as an antagonist peptide of the cannabinoid receptor CNR1. Hemopressin-binding efficiently blocks cannabinoid receptor CNR1 and subsequent signaling. The sequence is that of Hemoglobin subunit alpha (HBA) from Lutra lutra (European river otter).